We begin with the raw amino-acid sequence, 126 residues long: MEFPSNVKYTKEHEWIRVEGDIAYVGITDYAQEQLGDIVFVDITTEGETLEKDEVFGTIEVVKTISDLFLPVSGEVLEQNEALADNPELVNQDPYGKGWLIKIKPNDSNDVNDLLDAEGYKALVNE.

In terms of domain architecture, Lipoyl-binding spans 22–104; the sequence is IAYVGITDYA…YGKGWLIKIK (83 aa). The residue at position 63 (Lys-63) is an N6-lipoyllysine.

This sequence belongs to the GcvH family. In terms of assembly, the glycine cleavage system is composed of four proteins: P, T, L and H. It depends on (R)-lipoate as a cofactor.

Functionally, the glycine cleavage system catalyzes the degradation of glycine. The H protein shuttles the methylamine group of glycine from the P protein to the T protein. This is Glycine cleavage system H protein from Phocaeicola vulgatus (strain ATCC 8482 / DSM 1447 / JCM 5826 / CCUG 4940 / NBRC 14291 / NCTC 11154) (Bacteroides vulgatus).